Here is a 1085-residue protein sequence, read N- to C-terminus: Solute carrier family 12 member 4 (1085 aa).

The Cytoplasmic portion of the chain corresponds to 1–119 (MPHFTVVPVD…RRAAEAPSMG (119 aa)). Residues Ser24, Ser47, Ser51, Ser81, and Ser88 each carry the phosphoserine modification. Residues 120–141 (TLMGVYLPCLQNIFGVILFLRL) traverse the membrane as a discontinuously helical segment. Asn131 and Ile132 together coordinate K(+). The Extracellular portion of the chain corresponds to 142–149 (TWMVGTAG). The helical transmembrane segment at 150 to 172 (VLQALLIVLICCCCTLLTAISMS) threads the bilayer. The Cytoplasmic portion of the chain corresponds to 173 to 196 (AIATNGVVPAGGSYFMISRSLGPE). The chain crosses the membrane as a helical span at residues 197-225 (FGGAVGLCFYLGTTFAAAMYILGAIEILL). Tyr216 contacts K(+). Residues 226-248 (TYIAPPAAIFYPSGAHDTSNATL) lie on the Extracellular side of the membrane. An N-linked (GlcNAc...) asparagine glycan is attached at Asn245. 2 helical membrane-spanning segments follow: residues 249 to 271 (NNMR…VGVK) and 272 to 297 (YVNK…GGIK). Residues 298 to 419 (SIFDPPVFPV…LYVVADIATS (122 aa)) are Extracellular-facing. Residues Cys308 and Cys323 are joined by a disulfide bond. N-linked (GlcNAc...) asparagine glycans are attached at residues Asn312, Asn331, Asn347, and Asn361. An intrachain disulfide couples Cys343 to Cys353. A helical transmembrane segment spans residues 420-440 (FTVLVGIFFPSVTGIMAGSNR). Residues Pro429 and Thr432 each contribute to the K(+) site. Chloride is bound by residues Gly433, Ile434, and Met435. Residues 441 to 450 (SGDLRDAQKS) lie on the Cytoplasmic side of the membrane. Residues 451–473 (IPVGTILAIITTSLVYFSSVVLF) traverse the membrane as a helical segment. Residues 474–504 (GACIEGVVLRDKYGDGVSRNLVVGTLAWPSP) are Extracellular-facing. Residues 505 to 531 (WVIVIGSFFSTCGAGLQSLTGAPRLLQ) traverse the membrane as a helical segment. The Cytoplasmic segment spans residues 532 to 554 (AIAKDNIIPFLRVFGHGKVNGEP). The next 2 membrane-spanning stretches (helical) occupy residues 555–575 (TWAL…ASLD) and 576–598 (MVAP…ACAV). Tyr589 lines the chloride pocket. At 599–612 (QTLLRTPNWRPRFK) the chain is on the cytoplasmic side. 2 consecutive transmembrane segments (helical) span residues 613–635 (YYHW…VSSW) and 636–651 (YYAL…IYKY). Residues 652–1085 (IEYQGAEKEW…GGREVITIYS (434 aa)) are Cytoplasmic-facing. Residues 665 to 681 (IRGLSLSAARYALLRLE) form a scissor helix region. ATP-binding residues include Leu697, Lys699, Lys707, Tyr708, and Val730. Ser734 is modified (phosphoserine). ATP is bound by residues Gly794, Trp795, and Tyr797. 2 positions are modified to phosphoserine: Ser916 and Ser967. Thr983 carries the post-translational modification Phosphothreonine. Ser1050 is modified (phosphoserine).

This sequence belongs to the SLC12A transporter family. K/Cl co-transporter subfamily. Homodimer; adopts a domain-swap conformation at the scissor helices connecting the transmembrane domain and C-terminal domain. Heterodimer with other K-Cl cotransporters. In terms of processing, phosphorylated, phosphorylation may regulate transporter activity. As to expression, ubiquitous. Levels are much higher in erythrocytes from patients with Hb SC and Hb SS compared to normal AA erythrocytes. This may contribute to red blood cell dehydration and to the manifestation of sickle cell disease by increasing the intracellular concentration of HbS. In terms of tissue distribution, not detected in circulating reticulocytes.

The protein localises to the cell membrane. It catalyses the reaction K(+)(in) + chloride(in) = K(+)(out) + chloride(out). Its activity is regulated as follows. Inhibited by WNK3. In terms of biological role, mediates electroneutral potassium-chloride cotransport when activated by cell swelling. May contribute to cell volume homeostasis in single cells. May be involved in the regulation of basolateral Cl(-) exit in NaCl absorbing epithelia. Its function is as follows. No transporter activity. This Homo sapiens (Human) protein is Solute carrier family 12 member 4.